A 295-amino-acid chain; its full sequence is Virginiamycin B lyase (295 aa).

His228 is a binding site for substrate. Glu268 lines the Mg(2+) pocket. Residue His270 is the Proton acceptor of the active site. Glu285 contacts Mg(2+).

Belongs to the Vgb family. In terms of assembly, monomer. The cofactor is Mg(2+).

Functionally, inactivates the type B streptogramin antibiotics by linearizing the lactone ring at the ester linkage, generating a free phenylglycine carboxylate and converting the threonyl moiety into 2-amino-butenoic acid. In Clostridium beijerinckii (strain ATCC 51743 / NCIMB 8052) (Clostridium acetobutylicum), this protein is Virginiamycin B lyase.